Consider the following 248-residue polypeptide: Probable septum site-determining protein MinC (248 aa).

The disordered stretch occupies residues 94–126; that stretch reads GMPPAMRGGQPAADFEAPAGEPQANPGAPEPQI.

This sequence belongs to the MinC family. As to quaternary structure, interacts with MinD and FtsZ.

Its function is as follows. Cell division inhibitor that blocks the formation of polar Z ring septums. Rapidly oscillates between the poles of the cell to destabilize FtsZ filaments that have formed before they mature into polar Z rings. Prevents FtsZ polymerization. In Brucella suis biovar 1 (strain 1330), this protein is Probable septum site-determining protein MinC.